The sequence spans 1102 residues: Putative helicase/primase complex protein (1102 aa).

Disordered stretches follow at residues 1031–1057 (TKEEISSTKEETYSTKEETYSTKEETC) and 1082–1102 (EETCSIKEETSSIKEETFTET).

This sequence belongs to the asfivirus F1055L family.

Its function is as follows. May be involved in DNA replication. The sequence is that of Putative helicase/primase complex protein from African swine fever virus (isolate Tick/Malawi/Lil 20-1/1983) (ASFV).